Consider the following 103-residue polypeptide: Small ribosomal subunit protein uS10 (103 aa).

This sequence belongs to the universal ribosomal protein uS10 family. As to quaternary structure, part of the 30S ribosomal subunit.

Functionally, involved in the binding of tRNA to the ribosomes. The chain is Small ribosomal subunit protein uS10 from Aliivibrio fischeri (strain ATCC 700601 / ES114) (Vibrio fischeri).